A 51-amino-acid polypeptide reads, in one-letter code: Large ribosomal subunit protein eL40 (51 aa).

Residues Cys-17, Cys-20, Cys-31, and Cys-34 each coordinate Zn(2+).

The protein belongs to the eukaryotic ribosomal protein eL40 family. In terms of assembly, part of the 50S ribosomal subunit. Requires Zn(2+) as cofactor.

The protein is Large ribosomal subunit protein eL40 of Thermococcus kodakarensis (strain ATCC BAA-918 / JCM 12380 / KOD1) (Pyrococcus kodakaraensis (strain KOD1)).